A 105-amino-acid chain; its full sequence is Small ribosomal subunit protein uS10 (105 aa).

It belongs to the universal ribosomal protein uS10 family. Part of the 30S ribosomal subunit.

Involved in the binding of tRNA to the ribosomes. This is Small ribosomal subunit protein uS10 from Anaplasma phagocytophilum (strain HZ).